The following is a 609-amino-acid chain: Phosphoenolpyruvate carboxykinase [GTP] (609 aa).

Substrate-binding positions include arginine 81 and 220–222 (YGG). Mn(2+)-binding residues include lysine 229 and histidine 249. Residue serine 271 coordinates substrate. 272–277 (ACGKTN) serves as a coordination point for GTP. Residue cysteine 273 is part of the active site. Aspartate 296 lines the Mn(2+) pocket. 387 to 389 (NSR) contacts substrate. GTP contacts are provided by residues arginine 389, arginine 420, and 515-518 (FGEN).

It belongs to the phosphoenolpyruvate carboxykinase [GTP] family. Monomer. Mn(2+) serves as cofactor.

The protein localises to the cytoplasm. The catalysed reaction is oxaloacetate + GTP = phosphoenolpyruvate + GDP + CO2. It functions in the pathway carbohydrate biosynthesis; gluconeogenesis. In terms of biological role, catalyzes the conversion of oxaloacetate (OAA) to phosphoenolpyruvate (PEP), the rate-limiting step in the metabolic pathway that produces glucose from lactate and other precursors derived from the citric acid cycle. The chain is Phosphoenolpyruvate carboxykinase [GTP] from Mycobacterium marinum (strain ATCC BAA-535 / M).